Reading from the N-terminus, the 198-residue chain is Ribonuclease HII (198 aa).

The 189-residue stretch at 10 to 198 (HLVAGVDEVG…PVKRALGLVS (189 aa)) folds into the RNase H type-2 domain. The a divalent metal cation site is built by Asp16, Glu17, and Asp108.

It belongs to the RNase HII family. Requires Mn(2+) as cofactor. Mg(2+) serves as cofactor.

The protein localises to the cytoplasm. It catalyses the reaction Endonucleolytic cleavage to 5'-phosphomonoester.. Functionally, endonuclease that specifically degrades the RNA of RNA-DNA hybrids. The polypeptide is Ribonuclease HII (Salmonella schwarzengrund (strain CVM19633)).